The primary structure comprises 485 residues: DNA polymerase subunit gamma-2 (485 aa).

The interval 28-67 (RQPEQLSKGTGSFVGPVRSQAELPRNEPREAPESGGEGSE) is disordered.

Heterotrimer composed of a catalytic subunit and a homodimer of accessory subunits (POLG:POLG2).

The protein localises to the mitochondrion. The protein resides in the mitochondrion matrix. It is found in the mitochondrion nucleoid. Accessory subunit of DNA polymerase gamma solely responsible for replication of mitochondrial DNA (mtDNA). Acts as an allosteric regulator of the holoenzyme activities. Enhances the polymerase activity and the processivity of POLG by increasing its interactions with the DNA template. Suppresses POLG exonucleolytic proofreading especially toward homopolymeric templates bearing mismatched termini. Binds to single-stranded DNA. The protein is DNA polymerase subunit gamma-2 (POLG2) of Bos taurus (Bovine).